An 816-amino-acid chain; its full sequence is H(+)/Cl(-) exchange transporter 5 (816 aa).

Over 1–124 (MAMWQGAMDN…WALIHSVSDA (124 aa)) the chain is Cytoplasmic. Helical transmembrane passes span 125–162 (FSGW…ICTG) and 208–231 (VNYF…VKVF). Residues 237-241 (GSGIP) carry the Selectivity filter part_1 motif. Residue S238 coordinates chloride. Residues 240-247 (IPEIKTIL) constitute an intramembrane region (helical). The next 2 membrane-spanning stretches (helical) occupy residues 256 to 275 (LGKW…VSSG) and 281 to 300 (EGPL…HRFN). A Selectivity filter part_2 motif is present at residues 279-283 (GKEGP). 2 consecutive intramembrane regions (helical) follow at residues 312 to 324 (VLSA…VSVA) and 328 to 336 (PIGGVLFSL). The next 5 membrane-spanning stretches (helical) occupy residues 348–366 (LWRS…RSIN), 389–414 (LVPF…IAWC), 422–442 (LGKY…ILAF), 498–518 (MWQL…TFGM), and 523–542 (GLFI…LGVG). Residues 523–527 (GLFIP) carry the Selectivity filter part_3 motif. Residue F525 participates in chloride binding. Positions 570–584 (GLYAMVGAAACLGGV) form an intramembrane region, helical. An intramembrane region (note=Loop between two helices) is located at residues 585 to 587 (TRM). An intramembrane region (helical) is located at residues 588 to 599 (TVSLVVIMFELT). The note=Loop between two helices intramembrane region spans 600 to 604 (GGLEY). The chain crosses the membrane as a helical span at residues 605–622 (IVPLMAAAMTSKWVADAL). At 623–816 (GREGIYDAHI…NQDPDSILFN (194 aa)) the chain is on the cytoplasmic side. Y628 contacts chloride. CBS domains follow at residues 656–720 (MKPR…ARKK) and 752–812 (ILDL…DPDS). ATP-binding positions include T666, 687 to 689 (YSG), and 794 to 797 (TKKD).

This sequence belongs to the chloride channel (TC 2.A.49) family. ClC-5/CLCN5 subfamily. In terms of assembly, interacts with NEDD4 and NEDD4L. Ubiquitinated by NEDD4L in the presence of albumin; which promotes endocytosis and proteasomal degradation.

It is found in the golgi apparatus membrane. The protein localises to the endosome membrane. Its subcellular location is the cell membrane. It carries out the reaction 2 chloride(in) + H(+)(out) = 2 chloride(out) + H(+)(in). Its function is as follows. Proton-coupled chloride transporter. Functions as antiport system and exchanges chloride ions against protons. Important for normal acidification of the endosome lumen. May play an important role in renal tubular function. The CLC channel family contains both chloride channels and proton-coupled anion transporters that exchange chloride or another anion for protons. The absence of conserved gating glutamate residues is typical for family members that function as channels. In Oryctolagus cuniculus (Rabbit), this protein is H(+)/Cl(-) exchange transporter 5 (CLCN5).